The following is a 355-amino-acid chain: Histidinol-phosphate aminotransferase (355 aa).

Position 218 is an N6-(pyridoxal phosphate)lysine (K218).

It belongs to the class-II pyridoxal-phosphate-dependent aminotransferase family. Histidinol-phosphate aminotransferase subfamily. In terms of assembly, homodimer. Requires pyridoxal 5'-phosphate as cofactor.

It catalyses the reaction L-histidinol phosphate + 2-oxoglutarate = 3-(imidazol-4-yl)-2-oxopropyl phosphate + L-glutamate. Its pathway is amino-acid biosynthesis; L-histidine biosynthesis; L-histidine from 5-phospho-alpha-D-ribose 1-diphosphate: step 7/9. This chain is Histidinol-phosphate aminotransferase, found in Chlorobium limicola (strain DSM 245 / NBRC 103803 / 6330).